Here is a 317-residue protein sequence, read N- to C-terminus: Apolipoprotein E (317 aa).

An N-terminal signal peptide occupies residues 1–18 (MKVLWAALLVTFLAGCQA). 8 consecutive repeat copies span residues 80–101 (ALMDETMKELKAYKSELEEQLT), 102–123 (PVAEETRARLSKELQAAQARLG), 124–145 (ADMEDVRGRLVQYRGEVQAMLG), 146–167 (QSTEELRARLASHLRKLRKRLL), 168–189 (RDADDLQKRLAVYQAGAREGAE), 190–211 (RGVSAIRERLGPLVEQGRVRAA), 212–233 (TVGSVAGKPLQERAQAWGERLR), and 234–255 (ARMEEMGSRTRDRLDEVKEQVA). The segment at 80 to 255 (ALMDETMKEL…RLDEVKEQVA (176 aa)) is 8 X 22 AA approximate tandem repeats. At methionine 143 the chain carries Methionine sulfoxide. Serine 147 carries the post-translational modification Phosphoserine. Residues 158-168 (HLRKLRKRLLR) are LDL and other lipoprotein receptors binding. Residue 162–165 (LRKR) participates in heparin binding. Residues 210-290 (AATVGSVAGK…SWFEPLVEDM (81 aa)) are lipid-binding and lipoprotein association. Residue 229 to 236 (GERLRARM) participates in heparin binding. The interval 266–317 (QQIRLQAEAFQARLKSWFEPLVEDMQRQWAGLVEKVQAAVGTSAAPVPSDNH) is homooligomerization. The interval 278–290 (RLKSWFEPLVEDM) is specificity for association with VLDL.

This sequence belongs to the apolipoprotein A1/A4/E family. In terms of assembly, homotetramer. May interact with ABCA1; functionally associated with ABCA1 in the biogenesis of HDLs. May interact with APP/A4 amyloid-beta peptide; the interaction is extremely stable in vitro but its physiological significance is unclear. May interact with MAPT. May interact with MAP2. In the cerebrospinal fluid, interacts with secreted SORL1. Interacts with PMEL; this allows the loading of PMEL luminal fragment on ILVs to induce fibril nucleation. APOE exists as multiple glycosylated and sialylated glycoforms within cells and in plasma. The extent of glycosylation and sialylation are tissue and context specific. Post-translationally, glycated in plasma VLDL. In terms of processing, phosphorylated by FAM20C in the extracellular medium.

The protein localises to the secreted. Its subcellular location is the extracellular space. It localises to the extracellular matrix. It is found in the extracellular vesicle. The protein resides in the endosome. The protein localises to the multivesicular body. Its function is as follows. APOE is an apolipoprotein, a protein associating with lipid particles, that mainly functions in lipoprotein-mediated lipid transport between organs via the plasma and interstitial fluids. APOE is a core component of plasma lipoproteins and is involved in their production, conversion and clearance. Apolipoproteins are amphipathic molecules that interact both with lipids of the lipoprotein particle core and the aqueous environment of the plasma. As such, APOE associates with chylomicrons, chylomicron remnants, very low density lipoproteins (VLDL) and intermediate density lipoproteins (IDL) but shows a preferential binding to high-density lipoproteins (HDL). It also binds a wide range of cellular receptors including the LDL receptor/LDLR, the LDL receptor-related proteins LRP1, LRP2 and LRP8 and the very low-density lipoprotein receptor/VLDLR that mediate the cellular uptake of the APOE-containing lipoprotein particles. Finally, APOE also has a heparin-binding activity and binds heparan-sulfate proteoglycans on the surface of cells, a property that supports the capture and the receptor-mediated uptake of APOE-containing lipoproteins by cells. A main function of APOE is to mediate lipoprotein clearance through the uptake of chylomicrons, VLDLs, and HDLs by hepatocytes. APOE is also involved in the biosynthesis by the liver of VLDLs as well as their uptake by peripheral tissues ensuring the delivery of triglycerides and energy storage in muscle, heart and adipose tissues. By participating in the lipoprotein-mediated distribution of lipids among tissues, APOE plays a critical role in plasma and tissues lipid homeostasis. APOE is also involved in two steps of reverse cholesterol transport, the HDLs-mediated transport of cholesterol from peripheral tissues to the liver, and thereby plays an important role in cholesterol homeostasis. First, it is functionally associated with ABCA1 in the biogenesis of HDLs in tissues. Second, it is enriched in circulating HDLs and mediates their uptake by hepatocytes. APOE also plays an important role in lipid transport in the central nervous system, regulating neuron survival and sprouting. The sequence is that of Apolipoprotein E (APOE) from Pongo pygmaeus (Bornean orangutan).